A 118-amino-acid polypeptide reads, in one-letter code: MKNKYIEQFEQKQIEGKNVPEFRAGDTLRLAIRIKEGDKTRIQNFEGICIARRGNGVDETFIVRKIGANNVGVERIFPIYSESLESITVLRRGRVRRARLFYLRDRRGKAARIKELKK.

The protein belongs to the bacterial ribosomal protein bL19 family.

Its function is as follows. This protein is located at the 30S-50S ribosomal subunit interface and may play a role in the structure and function of the aminoacyl-tRNA binding site. The chain is Large ribosomal subunit protein bL19 from Campylobacter lari (strain RM2100 / D67 / ATCC BAA-1060).